A 163-amino-acid chain; its full sequence is Phosphopantetheine adenylyltransferase (163 aa).

Ser-9 lines the substrate pocket. ATP contacts are provided by residues 9 to 10 (SF) and His-17. 3 residues coordinate substrate: Lys-41, Thr-73, and Arg-87. Residues 88 to 90 (GLR), Glu-98, and 123 to 129 (YSFISSG) contribute to the ATP site.

This sequence belongs to the bacterial CoaD family. In terms of assembly, homohexamer. Mg(2+) serves as cofactor.

It localises to the cytoplasm. It carries out the reaction (R)-4'-phosphopantetheine + ATP + H(+) = 3'-dephospho-CoA + diphosphate. It functions in the pathway cofactor biosynthesis; coenzyme A biosynthesis; CoA from (R)-pantothenate: step 4/5. Reversibly transfers an adenylyl group from ATP to 4'-phosphopantetheine, yielding dephospho-CoA (dPCoA) and pyrophosphate. The sequence is that of Phosphopantetheine adenylyltransferase from Desulforudis audaxviator (strain MP104C).